The chain runs to 1377 residues: DNA-directed RNA polymerase subunit beta (1377 aa).

It belongs to the RNA polymerase beta chain family. The RNAP catalytic core consists of 2 alpha, 1 beta, 1 beta' and 1 omega subunit. When a sigma factor is associated with the core the holoenzyme is formed, which can initiate transcription.

The catalysed reaction is RNA(n) + a ribonucleoside 5'-triphosphate = RNA(n+1) + diphosphate. Functionally, DNA-dependent RNA polymerase catalyzes the transcription of DNA into RNA using the four ribonucleoside triphosphates as substrates. This Orientia tsutsugamushi (strain Boryong) (Rickettsia tsutsugamushi) protein is DNA-directed RNA polymerase subunit beta.